A 227-amino-acid chain; its full sequence is MKVSYHGHSVVKIEANGKVILIDPFLTGNPKTDLKAEDVKVDAILLSHGHGDHVGDTVELAKKNNAVVVAPFELATFLSWQGVNTHPMHIGGSHEFDFGKVKFTQAFHGSSYIDEANKTITYTGMPAGILFTAEEKTVYHAGDTALFSDMKLIGELNKVDLAFLPIGDNFTMGPEDAVLAAKWINSKTVVPMHYNTFPVIEQDPYQFVEKLQNCTGKVLEAGESITL.

The protein belongs to the UPF0173 family.

The sequence is that of UPF0173 metal-dependent hydrolase BCG9842_B0515 from Bacillus cereus (strain G9842).